The sequence spans 421 residues: Expansin-like protein DDB_G0293186 (421 aa).

Residues 1-20 (MRTLKLIILLILSTFKTINS) form the signal peptide. A glycan (N-linked (GlcNAc...) asparagine) is linked at asparagine 19. One can recognise an Expansin-like EG45 domain in the interval 43 to 139 (GGQCGLPLPG…QKVSCGFSGY (97 aa)). Disulfide bonds link cysteine 46/cysteine 70 and cysteine 73/cysteine 134. 2 N-linked (GlcNAc...) asparagine glycosylation sites follow: asparagine 117 and asparagine 391.

It belongs to the expansin family. Expansin A subfamily.

It is found in the secreted. Its function is as follows. May serve to lubricate the movement of the cellulose microfibrils during cell growth and wall extension and/or may serve to maintain the fluid state of the slug cell wall. This chain is Expansin-like protein DDB_G0293186, found in Dictyostelium discoideum (Social amoeba).